The sequence spans 205 residues: Probable thymidylate kinase (205 aa).

9-16 (GIDGVGKS) lines the ATP pocket.

This sequence belongs to the thymidylate kinase family.

The enzyme catalyses dTMP + ATP = dTDP + ADP. The protein is Probable thymidylate kinase of Caldivirga maquilingensis (strain ATCC 700844 / DSM 13496 / JCM 10307 / IC-167).